We begin with the raw amino-acid sequence, 380 residues long: Queuine tRNA-ribosyltransferase (380 aa).

The active-site Proton acceptor is the D96. Substrate is bound by residues 96–100 (DSGGF), D150, Q193, and G220. The segment at 251–257 (GVGAPDS) is RNA binding. The active-site Nucleophile is the D270. The RNA binding; important for wobble base 34 recognition stretch occupies residues 275-279 (TRIAR). Residues C308, C310, C313, and H339 each coordinate Zn(2+).

It belongs to the queuine tRNA-ribosyltransferase family. In terms of assembly, homodimer. Within each dimer, one monomer is responsible for RNA recognition and catalysis, while the other monomer binds to the replacement base PreQ1. It depends on Zn(2+) as a cofactor.

The enzyme catalyses 7-aminomethyl-7-carbaguanine + guanosine(34) in tRNA = 7-aminomethyl-7-carbaguanosine(34) in tRNA + guanine. Its pathway is tRNA modification; tRNA-queuosine biosynthesis. In terms of biological role, catalyzes the base-exchange of a guanine (G) residue with the queuine precursor 7-aminomethyl-7-deazaguanine (PreQ1) at position 34 (anticodon wobble position) in tRNAs with GU(N) anticodons (tRNA-Asp, -Asn, -His and -Tyr). Catalysis occurs through a double-displacement mechanism. The nucleophile active site attacks the C1' of nucleotide 34 to detach the guanine base from the RNA, forming a covalent enzyme-RNA intermediate. The proton acceptor active site deprotonates the incoming PreQ1, allowing a nucleophilic attack on the C1' of the ribose to form the product. After dissociation, two additional enzymatic reactions on the tRNA convert PreQ1 to queuine (Q), resulting in the hypermodified nucleoside queuosine (7-(((4,5-cis-dihydroxy-2-cyclopenten-1-yl)amino)methyl)-7-deazaguanosine). This is Queuine tRNA-ribosyltransferase from Streptococcus pyogenes serotype M3 (strain ATCC BAA-595 / MGAS315).